A 288-amino-acid chain; its full sequence is MAAKIIDGKTIAQQVRSEVAQKVQARVAAGLRAPGLAVVLVGSNPASQIYVASKRKACEEVGFVSRSYDLPETTSEAELLELIDTLNADNTIDGILVQLPLPAGIDNVKVLERIAPDKDVDGFHPYNVGRLCQRAPRLRPCTPRGIVTLLERYNIDTFGLNAVVIGASNIVGRPMSMELLLAGCTTTVTHRFTKDLRRHVEHADLLIVAVGKPGFIPGEWIKEGAIVIDVGINRLENGKVVGDVVFEDAAARASYITPVPGGVGPMTVATLIENTLQACVEYHDPQGK.

NADP(+)-binding positions include 166–168 (GAS) and Ile232.

Belongs to the tetrahydrofolate dehydrogenase/cyclohydrolase family. As to quaternary structure, homodimer.

It catalyses the reaction (6R)-5,10-methylene-5,6,7,8-tetrahydrofolate + NADP(+) = (6R)-5,10-methenyltetrahydrofolate + NADPH. The enzyme catalyses (6R)-5,10-methenyltetrahydrofolate + H2O = (6R)-10-formyltetrahydrofolate + H(+). It functions in the pathway one-carbon metabolism; tetrahydrofolate interconversion. Functionally, catalyzes the oxidation of 5,10-methylenetetrahydrofolate to 5,10-methenyltetrahydrofolate and then the hydrolysis of 5,10-methenyltetrahydrofolate to 10-formyltetrahydrofolate. The sequence is that of Bifunctional protein FolD from Citrobacter koseri (strain ATCC BAA-895 / CDC 4225-83 / SGSC4696).